The sequence spans 155 residues: Ribosome-binding factor A (155 aa).

Belongs to the RbfA family. Monomer. Binds 30S ribosomal subunits, but not 50S ribosomal subunits or 70S ribosomes.

The protein resides in the cytoplasm. Functionally, one of several proteins that assist in the late maturation steps of the functional core of the 30S ribosomal subunit. Associates with free 30S ribosomal subunits (but not with 30S subunits that are part of 70S ribosomes or polysomes). Required for efficient processing of 16S rRNA. May interact with the 5'-terminal helix region of 16S rRNA. The chain is Ribosome-binding factor A from Methylocella silvestris (strain DSM 15510 / CIP 108128 / LMG 27833 / NCIMB 13906 / BL2).